Here is a 346-residue protein sequence, read N- to C-terminus: GTP 3',8-cyclase (346 aa).

A Radical SAM core domain is found at glutamine 10–leucine 240. Arginine 19 contributes to the GTP binding site. 2 residues coordinate [4Fe-4S] cluster: cysteine 26 and cysteine 30. Tyrosine 32 is a binding site for S-adenosyl-L-methionine. Cysteine 33 serves as a coordination point for [4Fe-4S] cluster. Arginine 65 is a binding site for GTP. Glycine 69 is an S-adenosyl-L-methionine binding site. Position 104 (threonine 104) interacts with GTP. Position 129 (serine 129) interacts with S-adenosyl-L-methionine. GTP is bound at residue lysine 177. Residue methionine 211 participates in S-adenosyl-L-methionine binding. Residues cysteine 274 and cysteine 277 each contribute to the [4Fe-4S] cluster site. Arginine 279–arginine 281 is a GTP binding site. Residue cysteine 291 coordinates [4Fe-4S] cluster. The disordered stretch occupies residues serine 326–glycine 346.

It belongs to the radical SAM superfamily. MoaA family. As to quaternary structure, monomer and homodimer. The cofactor is [4Fe-4S] cluster.

It carries out the reaction GTP + AH2 + S-adenosyl-L-methionine = (8S)-3',8-cyclo-7,8-dihydroguanosine 5'-triphosphate + 5'-deoxyadenosine + L-methionine + A + H(+). It functions in the pathway cofactor biosynthesis; molybdopterin biosynthesis. Functionally, catalyzes the cyclization of GTP to (8S)-3',8-cyclo-7,8-dihydroguanosine 5'-triphosphate. The chain is GTP 3',8-cyclase from Parasynechococcus marenigrum (strain WH8102).